The sequence spans 635 residues: Chaperone protein HtpG (635 aa).

The interval methionine 1–arginine 336 is a; substrate-binding. Residues glutamate 337–lysine 556 are b. The c stretch occupies residues leucine 557–alanine 635.

Belongs to the heat shock protein 90 family. As to quaternary structure, homodimer.

Its subcellular location is the cytoplasm. Molecular chaperone. Has ATPase activity. The protein is Chaperone protein HtpG of Azorhizobium caulinodans (strain ATCC 43989 / DSM 5975 / JCM 20966 / LMG 6465 / NBRC 14845 / NCIMB 13405 / ORS 571).